Reading from the N-terminus, the 333-residue chain is Transaldolase (333 aa).

The active-site Schiff-base intermediate with substrate is lysine 135.

The protein belongs to the transaldolase family. Type 1 subfamily. Homodimer.

Its subcellular location is the cytoplasm. The enzyme catalyses D-sedoheptulose 7-phosphate + D-glyceraldehyde 3-phosphate = D-erythrose 4-phosphate + beta-D-fructose 6-phosphate. It functions in the pathway carbohydrate degradation; pentose phosphate pathway; D-glyceraldehyde 3-phosphate and beta-D-fructose 6-phosphate from D-ribose 5-phosphate and D-xylulose 5-phosphate (non-oxidative stage): step 2/3. Transaldolase is important for the balance of metabolites in the pentose-phosphate pathway. The polypeptide is Transaldolase (Prochlorococcus marinus subsp. pastoris (strain CCMP1986 / NIES-2087 / MED4)).